The chain runs to 273 residues: Diaminopimelate epimerase (273 aa).

The substrate site is built by Asn11 and Asn60. Residue Cys69 is the Proton donor of the active site. Residues 70-71 (GN), Asn181, and 199-200 (ER) contribute to the substrate site. Residue Cys209 is the Proton acceptor of the active site. Position 210-211 (210-211 (GT)) interacts with substrate.

Belongs to the diaminopimelate epimerase family. In terms of assembly, homodimer.

It is found in the cytoplasm. It carries out the reaction (2S,6S)-2,6-diaminopimelate = meso-2,6-diaminopimelate. It participates in amino-acid biosynthesis; L-lysine biosynthesis via DAP pathway; DL-2,6-diaminopimelate from LL-2,6-diaminopimelate: step 1/1. Its function is as follows. Catalyzes the stereoinversion of LL-2,6-diaminopimelate (L,L-DAP) to meso-diaminopimelate (meso-DAP), a precursor of L-lysine and an essential component of the bacterial peptidoglycan. This Helicobacter pylori (strain HPAG1) protein is Diaminopimelate epimerase.